The primary structure comprises 115 residues: UPF0295 protein BPUM_0828 (115 aa).

2 helical membrane passes run 13-33 (TFALSLVFVGFLIMYIGVFFK) and 41-61 (FFMLLGVLSIGLSTVVYFWIG).

The protein belongs to the UPF0295 family.

It is found in the cell membrane. The chain is UPF0295 protein BPUM_0828 from Bacillus pumilus (strain SAFR-032).